Consider the following 126-residue polypeptide: UPF0538 protein C2orf76 homolog (126 aa).

This sequence belongs to the UPF0538 family.

The protein is UPF0538 protein C2orf76 homolog of Xenopus tropicalis (Western clawed frog).